Consider the following 63-residue polypeptide: Large ribosomal subunit protein bL28 (63 aa).

The interval 1-22 is disordered; it reads MSRRCAITGKSAMNGHSVSHAN.

This sequence belongs to the bacterial ribosomal protein bL28 family.

The chain is Large ribosomal subunit protein bL28 from Campylobacter hominis (strain ATCC BAA-381 / DSM 21671 / CCUG 45161 / LMG 19568 / NCTC 13146 / CH001A).